The primary structure comprises 260 residues: Transforming acid coiled-coil-containing protein 1 (260 aa).

Residues 1–43 (MSLNTTFTKEDGTEVVIPFNGSQNGHPENEEPEVEEAAEPSSS) are disordered. The stretch at 108-249 (ASSEELEKAL…CDQLLNDVDV (142 aa)) forms a coiled coil.

The protein belongs to the TACC family. As to quaternary structure, interacts with zyg-9 to form a heterodimer. Interacts with zyg-8 to form a heterodimer. Interacts with efa-6 (via N-terminus). As to expression, expressed in touch neurons.

It is found in the cytoplasm. The protein resides in the cytoskeleton. Its subcellular location is the spindle pole. The protein localises to the microtubule organizing center. It localises to the centrosome. It is found in the chromosome. The protein resides in the centromere. Its subcellular location is the kinetochore. The protein localises to the cell projection. It localises to the axon. It is found in the perikaryon. Involved in microtubule formation, polymerization and assembly, regulating microtubule nucleation and length. Plays a role in pronuclear migration and mitotic and meiotic spindle elongation during early embryogenesis. In complex with zyg-9, functions during the early stages of embryonic development to regulate microtubule assembly throughout the cell cycle. Specifically, the complex is required for the formation and growth of astral microtubules and spindle microtubules during mitotic spindle assembly. At anaphase, the complex is required for mitotic spindle positioning in one-cell stage embryos. The complex acts in a partially redundant manner with the tac-1/zyg-8 complex to regulate microtubule assembly and processes during interphase, mitosis and meiosis in embryos. Plays a role in injury-induced axonal regrowth, regeneration and microtubule stability in PLM neurons and this may be downstream of efa-6. This is Transforming acid coiled-coil-containing protein 1 from Caenorhabditis elegans.